Reading from the N-terminus, the 586-residue chain is CTP synthase 2 (586 aa).

A Glutamine amidotransferase type-1 domain is found at 300–554 (SIALVGKYTK…LAATGNLNAY (255 aa)). Active-site for GATase activity residues include Cys399, His526, and Glu528. The interval 563–586 (SSDRYSDASDDSFSEPRIAELEIS) is disordered. A phosphoserine mark is found at Ser568, Ser571, and Ser574.

The protein belongs to the CTP synthase family.

It carries out the reaction UTP + L-glutamine + ATP + H2O = CTP + L-glutamate + ADP + phosphate + 2 H(+). It participates in pyrimidine metabolism; CTP biosynthesis via de novo pathway; CTP from UDP: step 2/2. In terms of biological role, catalyzes the ATP-dependent amination of UTP to CTP with either L-glutamine or ammonia as the source of nitrogen. Constitutes the rate-limiting enzyme in the synthesis of cytosine nucleotides. The protein is CTP synthase 2 (CTPS2) of Homo sapiens (Human).